The primary structure comprises 42 residues: Lebocin-like anionic peptide 1 (42 aa).

Hemolymph.

The protein localises to the secreted. Antimicrobial protein. Has antibacterial activity against the Gram-positive bacteria M.luteus (MIC=22.7 uM) and L.monocytogenes (MIC=90.9 uM). Lacks antibacterial activity against the Gram-positive bacteria B.circulans, S.aureus, and S.lutea, and the Gram-negative bacteria E.coli D31, E.coli ATCC 25922, and S.typhimurium. Has antifungal activity against A.niger (MIC=90.9 uM) and T.harzianum (MIC=90.9 uM), but lacks antifungal activity against S.cerevisiae, P.pastoris, Z.marxianus, C.albicans, C.fructus, and F.oxysporum. The protein is Lebocin-like anionic peptide 1 of Galleria mellonella (Greater wax moth).